Consider the following 106-residue polypeptide: 3-phenylpropionate/cinnamic acid dioxygenase ferredoxin subunit (106 aa).

One can recognise a Rieske domain in the interval isoleucine 4 to isoleucine 99. [2Fe-2S] cluster-binding residues include cysteine 42, histidine 44, cysteine 62, and histidine 65.

It belongs to the bacterial ring-hydroxylating dioxygenase ferredoxin component family. This dioxygenase system consists of four proteins: the two subunits of the hydroxylase component (HcaE and HcaF), a ferredoxin (HcaC) and a ferredoxin reductase (HcaD). It depends on [2Fe-2S] cluster as a cofactor.

Its pathway is aromatic compound metabolism; 3-phenylpropanoate degradation. Its function is as follows. Part of the multicomponent 3-phenylpropionate dioxygenase, that converts 3-phenylpropionic acid (PP) and cinnamic acid (CI) into 3-phenylpropionate-dihydrodiol (PP-dihydrodiol) and cinnamic acid-dihydrodiol (CI-dihydrodiol), respectively. This protein seems to be a 2Fe-2S ferredoxin. The protein is 3-phenylpropionate/cinnamic acid dioxygenase ferredoxin subunit of Shigella boydii serotype 4 (strain Sb227).